Here is a 160-residue protein sequence, read N- to C-terminus: Major pollen allergen Cor a 1 isoforms 5, 6, 11 and 16 (160 aa).

The protein belongs to the BetVI family.

The polypeptide is Major pollen allergen Cor a 1 isoforms 5, 6, 11 and 16 (Corylus avellana (European hazel)).